We begin with the raw amino-acid sequence, 625 residues long: 1,4-alpha-glucan branching enzyme GlgB (625 aa).

Aspartate 302 acts as the Nucleophile in catalysis. Residue glutamate 355 is the Proton donor of the active site.

The protein belongs to the glycosyl hydrolase 13 family. GlgB subfamily. Monomer.

It catalyses the reaction Transfers a segment of a (1-&gt;4)-alpha-D-glucan chain to a primary hydroxy group in a similar glucan chain.. Its pathway is glycan biosynthesis; glycogen biosynthesis. Catalyzes the formation of the alpha-1,6-glucosidic linkages in glycogen by scission of a 1,4-alpha-linked oligosaccharide from growing alpha-1,4-glucan chains and the subsequent attachment of the oligosaccharide to the alpha-1,6 position. In Albidiferax ferrireducens (strain ATCC BAA-621 / DSM 15236 / T118) (Rhodoferax ferrireducens), this protein is 1,4-alpha-glucan branching enzyme GlgB.